The sequence spans 652 residues: Regulator of DNA class I crossover intermediates 1 (652 aa).

The segment at residues 1 to 231 is a DNA-binding region (binds DNA containing a D-loop); it reads MNWVGGSRSR…TLFERLNSLG (231 aa). 2 disordered regions span residues 363–434 and 469–506; these read NKTS…NIPS and KISLDSAQSSRSTSYSPRPTDSCFSSSSDLPSEDEDQI. The span at 377–388 shows a compositional bias: basic and acidic residues; that stretch reads YQREYNKNERND. A compositionally biased stretch (polar residues) spans 389–401; it reads LSTSFENDYYPSS. Over residues 402-417 the composition is skewed to basic and acidic residues; that stretch reads SERKEKFENDYQEKTP. Positions 473 to 498 are enriched in low complexity; the sequence is DSAQSSRSTSYSPRPTDSCFSSSSDL.

In terms of assembly, interacts with MSH5. Interacts with TEX11.

Its subcellular location is the chromosome. Its function is as follows. Involved in recombination, probably acting by stabilizing recombination intermediates during meiotic crossover formation. Required for normal germline development and fertility. Required for meiotic progression, complete chromosomal synapsis and crossover formation. Binds double-stranded DNA. However, also binds branched DNA molecules, such as those containing a D-loop or Holliday junction structure. Probably not required for formation of DNA double-strand breaks (DSBs). Also binds RNA in an RNA structure-independent manner, with a preference for binding 3'-UTR regions of mRNAs; may stabilize bound RNAs. In Homo sapiens (Human), this protein is Regulator of DNA class I crossover intermediates 1.